The sequence spans 203 residues: Auxin-responsive protein IAA4 (203 aa).

The tract at residues 1–31 is disordered; that stretch reads MEECKGGGMSPSSSMDSSTHPALSTTSSAAT. Over residues 10–31 the composition is skewed to low complexity; sequence SPSSSMDSSTHPALSTTSSAAT. The EAR-like (transcriptional repression) motif lies at 40-44; the sequence is LRLGL. Residues 108 to 202 form the PB1 domain; sequence TLFVKVYMEG…KKLRIARMDK (95 aa).

This sequence belongs to the Aux/IAA family. In terms of assembly, homodimers and heterodimers.

It localises to the nucleus. Functionally, aux/IAA proteins are short-lived transcriptional factors that function as repressors of early auxin response genes at low auxin concentrations. The chain is Auxin-responsive protein IAA4 (IAA4) from Oryza sativa subsp. japonica (Rice).